The sequence spans 496 residues: Probable CtpA-like serine protease (496 aa).

Residues 1 to 16 (MDDKQHTTSSDDERAE) are compositionally biased toward basic and acidic residues. The segment at 1–27 (MDDKQHTTSSDDERAENATSNQDQQTN) is disordered. Residues 17–27 (NATSNQDQQTN) are compositionally biased toward polar residues. A helical transmembrane segment spans residues 39–59 (FISILIGTIIITAVITVVAYI). The PDZ domain occupies 124–206 (TKSFNEGVSG…TEVTLTVQRG (83 aa)). Residues serine 329, aspartate 340, and lysine 354 each act as charge relay system in the active site.

It belongs to the peptidase S41A family.

The protein localises to the cell membrane. This is Probable CtpA-like serine protease from Staphylococcus aureus (strain MRSA252).